Reading from the N-terminus, the 591-residue chain is Aspartate--tRNA ligase (591 aa).

Position 175 (Glu175) interacts with L-aspartate. The interval 199–202 (QLFK) is aspartate. Arg221 is an L-aspartate binding site. ATP contacts are provided by residues 221–223 (RDE) and Gln230. His449 contributes to the L-aspartate binding site. Position 483 (Glu483) interacts with ATP. Arg490 contacts L-aspartate. 535–538 (GLDR) contacts ATP.

This sequence belongs to the class-II aminoacyl-tRNA synthetase family. Type 1 subfamily. As to quaternary structure, homodimer.

It is found in the cytoplasm. The enzyme catalyses tRNA(Asp) + L-aspartate + ATP = L-aspartyl-tRNA(Asp) + AMP + diphosphate. Functionally, catalyzes the attachment of L-aspartate to tRNA(Asp) in a two-step reaction: L-aspartate is first activated by ATP to form Asp-AMP and then transferred to the acceptor end of tRNA(Asp). This is Aspartate--tRNA ligase from Oceanobacillus iheyensis (strain DSM 14371 / CIP 107618 / JCM 11309 / KCTC 3954 / HTE831).